The chain runs to 319 residues: Cytochrome f (319 aa).

Positions 1–35 are cleaved as a signal peptide; that stretch reads METRNIFSWIKEQITRSISVSLMIYIITRTAVSNA. Heme contacts are provided by Tyr-36, Cys-56, Cys-59, and His-60. Residues 285 to 305 traverse the membrane as a helical segment; it reads VQGLLFFLASVILAQIFLVLK.

It belongs to the cytochrome f family. The 4 large subunits of the cytochrome b6-f complex are cytochrome b6, subunit IV (17 kDa polypeptide, petD), cytochrome f and the Rieske protein, while the 4 small subunits are PetG, PetL, PetM and PetN. The complex functions as a dimer. Requires heme as cofactor.

The protein resides in the plastid. The protein localises to the chloroplast thylakoid membrane. Its function is as follows. Component of the cytochrome b6-f complex, which mediates electron transfer between photosystem II (PSII) and photosystem I (PSI), cyclic electron flow around PSI, and state transitions. The polypeptide is Cytochrome f (Coffea arabica (Arabian coffee)).